We begin with the raw amino-acid sequence, 1117 residues long: Sodium-driven chloride bicarbonate exchanger (1117 aa).

Residues 1–14 are compositionally biased toward polar residues; sequence MQSGTCESFQSLSH. 4 disordered regions span residues 1-26, 57-94, 244-312, and 456-475; these read MQSG…VDRG, GRKS…FDTP, KQSE…PHQQ, and NGTA…GPEL. At 1–508 the chain is on the cytoplasmic side; sequence MQSGTCESFQ…DFTDALSLQC (508 aa). Over residues 15-26 the composition is skewed to basic and acidic residues; that stretch reads QRNDEEAVVDRG. Over residues 58–75 the composition is skewed to basic residues; sequence RKSHRRHRHRGHKHRKRD. Positions 76 to 89 are enriched in basic and acidic residues; that stretch reads RERDSGLEDGRESP. A Phosphoserine modification is found at S88. T93 bears the Phosphothreonine mark. The segment covering 247 to 263 has biased composition (polar residues); it reads EPNSMDKNAGQVVSPQS. At S275 the chain carries Phosphoserine. The helical transmembrane segment at 509–529 threads the bilayer; that stretch reads LASFLFLYCACMSPVITFGGL. Over 530–537 the chain is Extracellular; it reads LGEATEGR. Residues 538-558 traverse the membrane as a helical segment; it reads ISAIESLFGASMTGIAYSLFG. Residues 559 to 561 are Cytoplasmic-facing; the sequence is GQP. Residues 562-582 traverse the membrane as a helical segment; the sequence is LTILGSTGPVLVFEKILFKFC. Residues 583–595 are Extracellular-facing; that stretch reads KEYGLSYLSLRAS. Residues 596–616 form a helical membrane-spanning segment; it reads IGLWTATLCIILVATDASSLV. The Cytoplasmic segment spans residues 617-625; the sequence is CYITRFTEE. The chain crosses the membrane as a helical span at residues 626–646; sequence AFASLICIIFIYEALEKLFEL. Residues 647–719 lie on the Extracellular side of the membrane; the sequence is SEAYPINMHN…VGRACGHEHP (73 aa). N673, N676, N686, and N696 each carry an N-linked (GlcNAc...) asparagine glycan. Residues 720–740 traverse the membrane as a helical segment; the sequence is YVPDVLFWSVILFFSTVTLSA. The Cytoplasmic segment spans residues 741-761; the sequence is TLKQFKTSRYFPTKVRSIVSD. Residues 762 to 782 form a helical membrane-spanning segment; the sequence is FAVFLTILCMVLIDYAIGIPS. Residues 783 to 808 are Extracellular-facing; sequence PKLQVPSVFKPTRDDRGWFVTPLGPN. The chain crosses the membrane as a helical span at residues 809–829; it reads PWWTVIAAIIPALLCTILIFM. Topologically, residues 830-854 are cytoplasmic; sequence DQQITAVIINRKEHKLKKGCGYHLD. The chain crosses the membrane as a helical span at residues 855–875; it reads LLMVAVMLGVCSIMGLPWFVA. Residues 876-911 are Extracellular-facing; the sequence is ATVLSITHVNSLKLESECSAPGEQPKFLGIREQRVT. A helical membrane pass occupies residues 912-932; that stretch reads GLMIFILMGSSVFMTSILKFI. The Cytoplasmic portion of the chain corresponds to 933–934; it reads PM. A helical membrane pass occupies residues 935–955; it reads PVLYGVFLYMGASSLKGIQFF. Topologically, residues 956–997 are extracellular; that stretch reads DRIKLFWMPAKHQPDFIYLRHVPLRKVHLFTVIQMSCLGLLW. Residues 998-1018 form a helical membrane-spanning segment; it reads IIKVSRAAIVFPMMVLALVFV. Residues 1019-1117 are Cytoplasmic-facing; sequence RKLMDFLFTK…SSFPSKSSPS (99 aa). Phosphoserine is present on residues S1056 and S1084.

It belongs to the anion exchanger (TC 2.A.31) family. Post-translationally, N-glycosylated.

Its subcellular location is the basolateral cell membrane. The protein localises to the apical cell membrane. It localises to the cell projection. It is found in the dendrite. The protein resides in the axon. Its subcellular location is the perikaryon. The protein localises to the presynapse. It localises to the postsynapse. In terms of biological role, sodium/bicarbonate cotransporter which plays an important role in regulating intracellular pH. Has been shown to act as a sodium/bicarbonate cotransporter in exchange for intracellular chloride. Has also been shown to act as a sodium/biocarbonate cotransporter which does not couple net influx of bicarbonate to net efflux of chloride, with the observed chloride efflux being due to chloride self-exchange. Controls neuronal pH and may contribute to the secretion of cerebrospinal fluid. Acting on presynaptic intracellular pH, it promotes GABA release, reduces the excitability of CA1 pyramidal neurons, and modulates short-term synaptic plasticity. Required in retinal cells to maintain normal pH which is necessary for normal vision. In the kidney, likely to mediate bicarbonate reclamation in the apical membrane of the proximal tubules. This chain is Sodium-driven chloride bicarbonate exchanger, found in Bos taurus (Bovine).